Consider the following 390-residue polypeptide: Pyruvate dehydrogenase E1 component subunit alpha, somatic form, mitochondrial (390 aa).

Residues 1–29 constitute a mitochondrion transit peptide; sequence MRKMLAAVSRVLSGVAQKPASRVLVASRH. N6-acetyllysine; alternate is present on lysine 63. N6-succinyllysine; alternate is present on lysine 63. Positions 92, 118, 119, 157, 165, 167, 196, 197, 198, 225, and 227 each coordinate pyruvate. Tyrosine 118 and arginine 119 together coordinate thiamine diphosphate. Residues glycine 165, valine 167, aspartate 196, glycine 197, alanine 198, and asparagine 225 each coordinate thiamine diphosphate. A Mg(2+)-binding site is contributed by aspartate 196. The Mg(2+) site is built by asparagine 225 and tyrosine 227. A Phosphoserine; by PDK1 modification is found at serine 232. Lysine 244 bears the N6-acetyllysine; alternate mark. Lysine 244 carries the N6-succinyllysine; alternate modification. N6-acetyllysine is present on lysine 267. Lysine 277 carries the N6-succinyllysine modification. Histidine 292 contributes to the thiamine diphosphate binding site. At serine 293 the chain carries Phosphoserine; by PDK1, PDK2, PDK3 and PDK4. Serine 295 bears the Phosphoserine mark. At serine 300 the chain carries Phosphoserine; by PDK1, PDK2, PDK3 and PDK4. Tyrosine 301 is subject to Phosphotyrosine. An N6-acetyllysine; alternate modification is found at lysine 313. Lysine 313 carries the N6-succinyllysine; alternate modification. Lysine 321 and lysine 336 each carry N6-acetyllysine. Lysine 385 is subject to N6-succinyllysine.

As to quaternary structure, heterotetramer of two PDHA1 and two PDHB subunits. The heterotetramer interacts with DLAT, and is part of the multimeric pyruvate dehydrogenase complex that contains multiple copies of pyruvate dehydrogenase (E1), dihydrolipoamide acetyltransferase (DLAT, E2) and lipoamide dehydrogenase (DLD, E3). These subunits are bound to an inner core composed of about 48 DLAT and 12 PDHX molecules. Requires thiamine diphosphate as cofactor. The cofactor is Mg(2+). Post-translationally, phosphorylation at Ser-232, Ser-293 and Ser-300 by PDK family kinases inactivates the enzyme; for this phosphorylation at a single site is sufficient. Phosphorylation at Ser-293 interferes with access to active site, and thereby inactivates the enzyme. Dephosphorylation at all three sites, i.e. at Ser-232, Ser-293 and Ser-300, is required for reactivation. In terms of processing, acetylation alters the phosphorylation pattern. Deacetylated by SIRT3.

It is found in the mitochondrion matrix. It catalyses the reaction N(6)-[(R)-lipoyl]-L-lysyl-[protein] + pyruvate + H(+) = N(6)-[(R)-S(8)-acetyldihydrolipoyl]-L-lysyl-[protein] + CO2. With respect to regulation, pyruvate dehydrogenase activity is inhibited by phosphorylation of PDHA1; it is reactivated by dephosphorylation. The pyruvate dehydrogenase complex catalyzes the overall conversion of pyruvate to acetyl-CoA and CO(2), and thereby links the glycolytic pathway to the tricarboxylic cycle. This is Pyruvate dehydrogenase E1 component subunit alpha, somatic form, mitochondrial (PDHA1) from Bos taurus (Bovine).